Reading from the N-terminus, the 733-residue chain is Phosphoribosylformylglycinamidine synthase subunit PurL (733 aa).

Residue H44 is part of the active site. Y47 and K86 together coordinate ATP. Residue E88 participates in Mg(2+) binding. Substrate is bound by residues 89–92 (SHNH) and R111. Residue H90 is the Proton acceptor of the active site. D112 is a binding site for Mg(2+). Q240 provides a ligand contact to substrate. A Mg(2+)-binding site is contributed by D268. 312 to 314 (ESQ) is a binding site for substrate. Residues D496 and G533 each contribute to the ATP site. N534 lines the Mg(2+) pocket. Position 536 (S536) interacts with substrate.

This sequence belongs to the FGAMS family. In terms of assembly, monomer. Part of the FGAM synthase complex composed of 1 PurL, 1 PurQ and 2 PurS subunits.

It localises to the cytoplasm. It catalyses the reaction N(2)-formyl-N(1)-(5-phospho-beta-D-ribosyl)glycinamide + L-glutamine + ATP + H2O = 2-formamido-N(1)-(5-O-phospho-beta-D-ribosyl)acetamidine + L-glutamate + ADP + phosphate + H(+). The protein operates within purine metabolism; IMP biosynthesis via de novo pathway; 5-amino-1-(5-phospho-D-ribosyl)imidazole from N(2)-formyl-N(1)-(5-phospho-D-ribosyl)glycinamide: step 1/2. In terms of biological role, part of the phosphoribosylformylglycinamidine synthase complex involved in the purines biosynthetic pathway. Catalyzes the ATP-dependent conversion of formylglycinamide ribonucleotide (FGAR) and glutamine to yield formylglycinamidine ribonucleotide (FGAM) and glutamate. The FGAM synthase complex is composed of three subunits. PurQ produces an ammonia molecule by converting glutamine to glutamate. PurL transfers the ammonia molecule to FGAR to form FGAM in an ATP-dependent manner. PurS interacts with PurQ and PurL and is thought to assist in the transfer of the ammonia molecule from PurQ to PurL. In Wolinella succinogenes (strain ATCC 29543 / DSM 1740 / CCUG 13145 / JCM 31913 / LMG 7466 / NCTC 11488 / FDC 602W) (Vibrio succinogenes), this protein is Phosphoribosylformylglycinamidine synthase subunit PurL.